Here is a 399-residue protein sequence, read N- to C-terminus: MSESIFAERIVQNLLDTDFYKLTMMQAVLHNYPNAEVEWEFRCRSSEDLTPYLAEIRYQIERLSELSITADQLAFLERIPFIKPDFIRFLSLFRFNLRYVHTGIEDGQLSIRLRGPWLHVILFEVPLLAIVSEVRNRYRYREVLLEQAAERLYQKLDWLRAEASEDELAGFQLADFGTRRRFSYRVQEQAVHILKRDFPGRFVGTSNVHLAREFDLKPIGTMAHEWLMAHQQLGPRLIDSQIAALDCWVREYRGQLGIALTDCITMDAFLADFDLYFAKLFDGLRHDSGDPLEWAEKAIAHYEKLGIDPLSKTLVFSDGLDLPKSLRLYRALSGRIHVSFGVGTNLTCDIPGVEPMNIVIKMIACNGQPVAKISDTPGKTQCRDENFVSYLKHVFRVTQ.

At His224 the chain carries Phosphohistidine; by autocatalysis.

It belongs to the NAPRTase family. In terms of processing, transiently phosphorylated on a His residue during the reaction cycle. Phosphorylation strongly increases the affinity for substrates and increases the rate of nicotinate D-ribonucleotide production. Dephosphorylation regenerates the low-affinity form of the enzyme, leading to product release.

The catalysed reaction is nicotinate + 5-phospho-alpha-D-ribose 1-diphosphate + ATP + H2O = nicotinate beta-D-ribonucleotide + ADP + phosphate + diphosphate. It participates in cofactor biosynthesis; NAD(+) biosynthesis; nicotinate D-ribonucleotide from nicotinate: step 1/1. In terms of biological role, catalyzes the synthesis of beta-nicotinate D-ribonucleotide from nicotinate and 5-phospho-D-ribose 1-phosphate at the expense of ATP. This chain is Nicotinate phosphoribosyltransferase, found in Ectopseudomonas mendocina (strain ymp) (Pseudomonas mendocina).